Reading from the N-terminus, the 284-residue chain is Cell division protein FtsQ (284 aa).

Basic residues predominate over residues 1–10 (MAFGKSKNRR). Residues 1 to 23 (MAFGKSKNRRRQDAAQQKEAVRG) form a disordered region. Topologically, residues 1-34 (MAFGKSKNRRRQDAAQQKEAVRGAVRSQGPRALK) are cytoplasmic. Residues 35-52 (VLGLTLGTGLLVWGGAAL) form a helical membrane-spanning segment. The Periplasmic segment spans residues 53–284 (REWTLTSPRF…ASERSGASMR (232 aa)). The POTRA domain occupies 62–130 (FELEAVSFSG…NRVSVEVTEH (69 aa)).

It belongs to the FtsQ/DivIB family. FtsQ subfamily.

It localises to the cell inner membrane. Essential cell division protein. The chain is Cell division protein FtsQ from Myxococcus fulvus (strain ATCC BAA-855 / HW-1).